A 267-amino-acid chain; its full sequence is Tryptophan synthase alpha chain (267 aa).

Residues Glu-47 and Asp-58 each act as proton acceptor in the active site.

Belongs to the TrpA family. In terms of assembly, tetramer of two alpha and two beta chains.

It carries out the reaction (1S,2R)-1-C-(indol-3-yl)glycerol 3-phosphate + L-serine = D-glyceraldehyde 3-phosphate + L-tryptophan + H2O. It functions in the pathway amino-acid biosynthesis; L-tryptophan biosynthesis; L-tryptophan from chorismate: step 5/5. In terms of biological role, the alpha subunit is responsible for the aldol cleavage of indoleglycerol phosphate to indole and glyceraldehyde 3-phosphate. This Chlorobium limicola (strain DSM 245 / NBRC 103803 / 6330) protein is Tryptophan synthase alpha chain.